The chain runs to 258 residues: Deoxyribose-phosphate aldolase (258 aa).

Catalysis depends on Asp101, which acts as the Proton donor/acceptor. Residue Lys166 is the Schiff-base intermediate with acetaldehyde of the active site. Lys200 (proton donor/acceptor) is an active-site residue.

The protein belongs to the DeoC/FbaB aldolase family. DeoC type 2 subfamily.

Its subcellular location is the cytoplasm. It catalyses the reaction 2-deoxy-D-ribose 5-phosphate = D-glyceraldehyde 3-phosphate + acetaldehyde. Its pathway is carbohydrate degradation; 2-deoxy-D-ribose 1-phosphate degradation; D-glyceraldehyde 3-phosphate and acetaldehyde from 2-deoxy-alpha-D-ribose 1-phosphate: step 2/2. Its function is as follows. Catalyzes a reversible aldol reaction between acetaldehyde and D-glyceraldehyde 3-phosphate to generate 2-deoxy-D-ribose 5-phosphate. The protein is Deoxyribose-phosphate aldolase of Actinobacillus pleuropneumoniae serotype 3 (strain JL03).